Consider the following 407-residue polypeptide: MDNVLPVDSDLSPNISTNTSEPNQFVQPAWQIVLWAAAYTVIVVTSVVGNVVVMWIILAHKRMRTVTNYFLVNLAFAEASMAAFNTVVNFTYAVHNEWYYGLFYCKFHNFFPIAAVFASIYSMTAVAFDRYMAIIHPLQPRLSATATKVVICVIWVLALLLAFPQGYYSTTETMPSRVVCMIEWPEHPNKIYEKVYHICVTVLIYFLPLLVIGYAYTVVGITLWASEIPGDSSDRYHEQVSAKRKVVKMMIVVVCTFAICWLPFHIFFLLPYINPDLYLKKFIQQVYLAIMWLAMSSTMYNPIIYCCLNDRFRLGFKHAFRCCPFISAGDYEGLEMKSTRYLQTQGSVYKVSRLETTISTVVGAHEEEPEDGPKATPSSLDLTSNCSSRSDSKTMTESFSFSSNVLS.

At 1–31 (MDNVLPVDSDLSPNISTNTSEPNQFVQPAWQ) the chain is on the extracellular side. 2 N-linked (GlcNAc...) asparagine glycosylation sites follow: Asn-14 and Asn-18. A helical membrane pass occupies residues 32-54 (IVLWAAAYTVIVVTSVVGNVVVM). Topologically, residues 55 to 64 (WIILAHKRMR) are cytoplasmic. A helical membrane pass occupies residues 65 to 86 (TVTNYFLVNLAFAEASMAAFNT). At 87–106 (VVNFTYAVHNEWYYGLFYCK) the chain is on the extracellular side. A disulfide bond links Cys-105 and Cys-180. Residues 107-128 (FHNFFPIAAVFASIYSMTAVAF) form a helical membrane-spanning segment. At 129 to 148 (DRYMAIIHPLQPRLSATATK) the chain is on the cytoplasmic side. The chain crosses the membrane as a helical span at residues 149-169 (VVICVIWVLALLLAFPQGYYS). The Extracellular segment spans residues 170–194 (TTETMPSRVVCMIEWPEHPNKIYEK). Residues 195-219 (VYHICVTVLIYFLPLLVIGYAYTVV) traverse the membrane as a helical segment. His-197 is a CP-96345 binding site. The Cytoplasmic segment spans residues 220–248 (GITLWASEIPGDSSDRYHEQVSAKRKVVK). Residues 249 to 270 (MMIVVVCTFAICWLPFHIFFLL) traverse the membrane as a helical segment. The Extracellular segment spans residues 271–283 (PYINPDLYLKKFI). A helical transmembrane segment spans residues 284 to 308 (QQVYLAIMWLAMSSTMYNPIIYCCL). Over 309–407 (NDRFRLGFKH…SFSFSSNVLS (99 aa)) the chain is Cytoplasmic. Cys-322 carries the S-palmitoyl cysteine lipid modification. Residues 364 to 407 (AHEEEPEDGPKATPSSLDLTSNCSSRSDSKTMTESFSFSSNVLS) are disordered. Residues 376–407 (TPSSLDLTSNCSSRSDSKTMTESFSFSSNVLS) are compositionally biased toward polar residues.

The protein belongs to the G-protein coupled receptor 1 family. In terms of assembly, interacts with ARRB1.

Its subcellular location is the cell membrane. In terms of biological role, this is a receptor for the tachykinin neuropeptide substance P. It is probably associated with G proteins that activate a phosphatidylinositol-calcium second messenger system. The rank order of affinity of this receptor to tachykinins is: substance P &gt; substance K &gt; neuromedin-K. The polypeptide is Substance-P receptor (TACR1) (Homo sapiens (Human)).